A 126-amino-acid polypeptide reads, in one-letter code: Cystatin-C (126 aa).

The first 18 residues, 1-18 (MKMLVFPVLAALFAVGLG), serve as a signal peptide directing secretion. A Cystatin domain is found at 22-115 (GAPRDINISE…CTFSVWSRPW (94 aa)). Residues 64–68 (QVVSG) carry the Secondary area of contact motif. 2 disulfide bridges follow: cysteine 82-cysteine 92 and cysteine 106-cysteine 126.

This sequence belongs to the cystatin family. Ubiquitously expressed in normal tissues including brain, eye, gill, heart, gullet, liver, spleen, stomach, pyloric ceca, intestine, kidney and muscle. Expressed, but not up-regulated, in lipopolysaccharide (LPS)-stimulated tissues including kidney, spleen, muscle and gill.

Its subcellular location is the secreted. Its function is as follows. Thiol protease inhibitor. Has high papain inhibitory activity and inhibits to a lesser extent fish cathepsins L, S, K, F, X and bovine cathepsin B in vitro. This Paralichthys olivaceus (Bastard halibut) protein is Cystatin-C.